Here is a 204-residue protein sequence, read N- to C-terminus: Pyrrolidone-carboxylate peptidase (204 aa).

Residues glutamate 80, cysteine 142, and histidine 165 contribute to the active site.

It belongs to the peptidase C15 family. In terms of assembly, homotetramer.

The protein resides in the cytoplasm. It catalyses the reaction Release of an N-terminal pyroglutamyl group from a polypeptide, the second amino acid generally not being Pro.. Functionally, removes 5-oxoproline from various penultimate amino acid residues except L-proline. The sequence is that of Pyrrolidone-carboxylate peptidase from Lysinibacillus sphaericus (strain C3-41).